A 263-amino-acid chain; its full sequence is N-acyl homoserine lactonase AttM (263 aa).

Residues His103, His105, Asp107, His108, His180, Asp202, and His247 each coordinate Zn(2+).

Belongs to the metallo-beta-lactamase superfamily. Zn(2+) is required as a cofactor.

It catalyses the reaction an N-acyl-L-homoserine lactone + H2O = an N-acyl-L-homoserine + H(+). The chain is N-acyl homoserine lactonase AttM from Agrobacterium fabrum (strain C58 / ATCC 33970) (Agrobacterium tumefaciens (strain C58)).